We begin with the raw amino-acid sequence, 236 residues long: Venom metalloproteinase antarease-like TfasMP_A (236 aa).

The 229-residue stretch at 4–232 folds into the Peptidase M12B domain; the sequence is IVVEYYIVTD…KPAASCIFEQ (229 aa). His-161 is a Zn(2+) binding site. Glu-162 is a catalytic residue. Zn(2+) contacts are provided by His-165 and His-171.

The protein belongs to the venom metalloproteinase (M12B) family. The cofactor is Zn(2+). In terms of processing, contains several disulfide bonds. In terms of tissue distribution, expressed by the venom gland.

The protein localises to the secreted. Inhibited by EDTA. Its function is as follows. Acts as a metalloprotease. Penetrates intact tissue and specifically cleaves the vesicle-associated membrane protein 2 (VAMP2) (part of the SNARE complex) involved in pancreatic secretion, thus disrupting the normal vesicular traffic. This chain is Venom metalloproteinase antarease-like TfasMP_A, found in Tityus fasciolatus (Central Brazilian scorpion).